A 174-amino-acid polypeptide reads, in one-letter code: Chorion class CB protein M5H4 (174 aa).

Positions 1–20 are cleaved as a signal peptide; it reads MTTIVVLICASALFVQLAFS. The left arm stretch occupies residues 21-71; the sequence is QCLGRDPVIGFGGAYGSGWGGYDAISPYDGLGYGVPYSAGFIGLSPSNLAA. The interval 72–142 is central domain; it reads SCGGALAVNS…GDGAIGIVSE (71 aa). Residues 143–174 form a right arm region; sequence APIVAPASIGYGQWPVNAGYKGIGPCGCGGLY.

The protein belongs to the chorion protein family.

Its function is as follows. This protein is one of many from the eggshell of the silk moth. This Bombyx mori (Silk moth) protein is Chorion class CB protein M5H4.